We begin with the raw amino-acid sequence, 232 residues long: Protein DOG1-like 4 (232 aa).

Residues 9-229 (EEKFLEFYES…RRWGNRRHYV (221 aa)) enclose the DOG1 domain.

This Arabidopsis thaliana (Mouse-ear cress) protein is Protein DOG1-like 4.